We begin with the raw amino-acid sequence, 333 residues long: Tubulin alpha chain (333 aa).

The GTP site is built by serine 48, glycine 52, threonine 53, threonine 88, asparagine 115, and asparagine 137.

Belongs to the tubulin family. In terms of assembly, dimer of alpha and beta chains. A typical microtubule is a hollow water-filled tube with an outer diameter of 25 nm and an inner diameter of 15 nM. Alpha-beta heterodimers associate head-to-tail to form protofilaments running lengthwise along the microtubule wall with the beta-tubulin subunit facing the microtubule plus end conferring a structural polarity. Microtubules usually have 13 protofilaments but different protofilament numbers can be found in some organisms and specialized cells. The cofactor is Mg(2+). In terms of processing, undergoes a tyrosination/detyrosination cycle, the cyclic removal and re-addition of a C-terminal tyrosine residue by the enzymes tubulin tyrosine carboxypeptidase (TTCP) and tubulin tyrosine ligase (TTL), respectively.

The protein localises to the cytoplasm. It is found in the cytoskeleton. It catalyses the reaction GTP + H2O = GDP + phosphate + H(+). Its function is as follows. Tubulin is the major constituent of microtubules, a cylinder consisting of laterally associated linear protofilaments composed of alpha- and beta-tubulin heterodimers. Microtubules grow by the addition of GTP-tubulin dimers to the microtubule end, where a stabilizing cap forms. Below the cap, tubulin dimers are in GDP-bound state, owing to GTPase activity of alpha-tubulin. This is Tubulin alpha chain (tuba) from Dictyostelium purpureum (Slime mold).